The chain runs to 277 residues: Urease accessory protein UreD (277 aa).

The protein belongs to the UreD family. UreD, UreF and UreG form a complex that acts as a GTP-hydrolysis-dependent molecular chaperone, activating the urease apoprotein by helping to assemble the nickel containing metallocenter of UreC. The UreE protein probably delivers the nickel.

The protein localises to the cytoplasm. In terms of biological role, required for maturation of urease via the functional incorporation of the urease nickel metallocenter. In Sinorhizobium medicae (strain WSM419) (Ensifer medicae), this protein is Urease accessory protein UreD.